Consider the following 312-residue polypeptide: Acetylglutamate kinase (312 aa).

Substrate is bound by residues 76-77, R98, and N199; that span reads GG.

This sequence belongs to the acetylglutamate kinase family. ArgB subfamily.

The protein resides in the cytoplasm. The catalysed reaction is N-acetyl-L-glutamate + ATP = N-acetyl-L-glutamyl 5-phosphate + ADP. It participates in amino-acid biosynthesis; L-arginine biosynthesis; N(2)-acetyl-L-ornithine from L-glutamate: step 2/4. Functionally, catalyzes the ATP-dependent phosphorylation of N-acetyl-L-glutamate. This chain is Acetylglutamate kinase, found in Beutenbergia cavernae (strain ATCC BAA-8 / DSM 12333 / CCUG 43141 / JCM 11478 / NBRC 16432 / NCIMB 13614 / HKI 0122).